The sequence spans 455 residues: GTPase Der (455 aa).

EngA-type G domains follow at residues 4–169 (PVVA…PPKD) and 178–353 (IQMA…EQHR). GTP is bound by residues 10–17 (GRPNVGKS), 57–61 (DTGGL), 120–123 (NKCE), 184–191 (GRPNVGKS), 231–235 (DTAGI), and 296–299 (NKWD). In terms of domain architecture, KH-like spans 354-439 (RRVSTSVVNE…PVKLYWRGKQ (86 aa)).

It belongs to the TRAFAC class TrmE-Era-EngA-EngB-Septin-like GTPase superfamily. EngA (Der) GTPase family. Associates with the 50S ribosomal subunit.

GTPase that plays an essential role in the late steps of ribosome biogenesis. The protein is GTPase Der of Parasynechococcus marenigrum (strain WH8102).